Here is a 138-residue protein sequence, read N- to C-terminus: Acidic phospholipase A2 PL1 (138 aa).

An N-terminal signal peptide occupies residues 1-16 (MRALWIVAVCLIGAEG). Intrachain disulfides connect Cys42-Cys131, Cys44-Cys60, Cys59-Cys111, Cys65-Cys138, Cys66-Cys104, Cys73-Cys97, and Cys91-Cys102. Residues Tyr43, Gly45, and Gly47 each contribute to the Ca(2+) site. His63 is an active-site residue. Asp64 is a binding site for Ca(2+). Residue Asp105 is part of the active site.

Belongs to the phospholipase A2 family. Group II subfamily. D49 sub-subfamily. Ca(2+) is required as a cofactor. As to expression, expressed by the venom gland.

The protein localises to the secreted. The enzyme catalyses a 1,2-diacyl-sn-glycero-3-phosphocholine + H2O = a 1-acyl-sn-glycero-3-phosphocholine + a fatty acid + H(+). Its function is as follows. PLA2 catalyzes the calcium-dependent hydrolysis of the 2-acyl groups in 3-sn-phosphoglycerides. The protein is Acidic phospholipase A2 PL1 of Vipera renardi (Steppe viper).